The chain runs to 117 residues: Immunoglobulin heavy variable 1-46 (117 aa).

Positions 1–19 (MDWTWRVFCLLAVAPGAHS) are cleaved as a signal peptide. The segment at 20-44 (QVQLVQSGAEVKKPGASVKVSCKAS) is framework-1. Residues 20–117 (QVQLVQSGAE…EDTAVYYCAR (98 aa)) enclose the Ig-like domain. An intrachain disulfide couples cysteine 41 to cysteine 115. Residues 45-52 (GYTFTSYY) are complementarity-determining-1. The framework-2 stretch occupies residues 53–69 (MHWVRQAPGQGLEWMGI). The complementarity-determining-2 stretch occupies residues 70-77 (INPSGGST). The interval 78–115 (SYAQKFQGRVTMTRDTSTSTVYMELSSLRSEDTAVYYC) is framework-3. The complementarity-determining-3 stretch occupies residues 116 to 117 (AR).

In terms of assembly, immunoglobulins are composed of two identical heavy chains and two identical light chains; disulfide-linked.

Its subcellular location is the secreted. The protein resides in the cell membrane. Its function is as follows. V region of the variable domain of immunoglobulin heavy chains that participates in the antigen recognition. Immunoglobulins, also known as antibodies, are membrane-bound or secreted glycoproteins produced by B lymphocytes. In the recognition phase of humoral immunity, the membrane-bound immunoglobulins serve as receptors which, upon binding of a specific antigen, trigger the clonal expansion and differentiation of B lymphocytes into immunoglobulins-secreting plasma cells. Secreted immunoglobulins mediate the effector phase of humoral immunity, which results in the elimination of bound antigens. The antigen binding site is formed by the variable domain of one heavy chain, together with that of its associated light chain. Thus, each immunoglobulin has two antigen binding sites with remarkable affinity for a particular antigen. The variable domains are assembled by a process called V-(D)-J rearrangement and can then be subjected to somatic hypermutations which, after exposure to antigen and selection, allow affinity maturation for a particular antigen. This Homo sapiens (Human) protein is Immunoglobulin heavy variable 1-46.